The chain runs to 266 residues: Dioicin-2 (266 aa).

2 cysteine pairs are disulfide-bonded: Cys-32/Cys-263 and Cys-85/Cys-102. Glu-176 is an active-site residue.

The protein resides in the secreted. It localises to the extracellular space. The protein localises to the golgi apparatus. It is found in the vacuole. The enzyme catalyses Endohydrolysis of the N-glycosidic bond at one specific adenosine on the 28S rRNA.. Functionally, nicks pBR322 dsDNA. Has adenine polynucleotide glycosidase activity on herring sperm ssDNA. The sequence is that of Dioicin-2 from Phytolacca dioica (Bella sombra tree).